A 437-amino-acid polypeptide reads, in one-letter code: Sodium/bile acid cotransporter 4 (437 aa).

The Extracellular portion of the chain corresponds to 1–103 (MDSLDNTTLL…PPFWDTPLNH (103 aa)). N-linked (GlcNAc...) asparagine glycosylation is found at asparagine 6 and asparagine 20. A disordered region spans residues 15-79 (SLLPDNLTLS…SSSLTVGVAG (65 aa)). Residues 22–41 (TLSPNAGSPSASTLSPLAVT) are compositionally biased toward polar residues. The span at 42-74 (SSPGPGLSLAPSPSIGFSPEATPTPEPTSSSLT) shows a compositional bias: low complexity. The helical transmembrane segment at 104–124 (GLNVFVGAALCITMLGLGCTV) threads the bilayer. Residues 125–140 (DVNHFGAHVRRPVGAL) are Cytoplasmic-facing. Residues 141 to 161 (LAALCQFGFLPLLAFLLALIF) traverse the membrane as a helical segment. The Extracellular segment spans residues 162-197 (KLDEVAAVAVLLCGCCPGGNLSNLMSLLVDGDMNLS). 2 N-linked (GlcNAc...) asparagine glycosylation sites follow: asparagine 181 and asparagine 195. A helical transmembrane segment spans residues 198–218 (IIMTISSTLLALVLMPLCLWI). Topologically, residues 219–233 (YSRAWINTPLVQLLP) are cytoplasmic. Residues 234–254 (LGAVTLTLCSTLIPIGLGVFI) form a helical membrane-spanning segment. At 255–267 (RYKYNRVADYIVK) the chain is on the extracellular side. The chain crosses the membrane as a helical span at residues 268–288 (VSLWSLLVTLVVLFIMTGTML). At 289–291 (GPE) the chain is on the cytoplasmic side. Residues 292–312 (LLASIPATVYVVAIFMPLAGY) traverse the membrane as a helical segment. Residues 313-360 (ASGYGLATLFHLPPNCKRTVCLETGSQNVQLCTAILKLAFPPRFIGSM) lie on the Extracellular side of the membrane. The helical transmembrane segment at 361–381 (YMFPLLYALFQSAEAGVFVLI) threads the bilayer. Over 382-437 (YKMYGSEILHKREALDEDEDTDISYKKLKEEEMADTSYGTVGTDDLVMMETTQTAL) the chain is Cytoplasmic.

This sequence belongs to the bile acid:sodium symporter (BASS) (TC 2.A.28) family. In terms of processing, activated following N-terminal proteolytic cleavage by thrombin and/or proteases. Highest expression in the brain and significantly above background levels in the eye, prostate, and whole embryo tissue preparations.

The protein localises to the cell membrane. In terms of biological role, transporter for bile acids. The protein is Sodium/bile acid cotransporter 4 (Slc10a4) of Mus musculus (Mouse).